The primary structure comprises 204 residues: Tat proofreading chaperone DmsD (204 aa).

Belongs to the TorD/DmsD family. DmsD subfamily.

Its function is as follows. Required for biogenesis/assembly of DMSO reductase, but not for the interaction of the DmsA signal peptide with the Tat system. May be part of a chaperone cascade complex that facilitates a folding-maturation pathway for the substrate protein. This Salmonella typhi protein is Tat proofreading chaperone DmsD.